The following is a 95-amino-acid chain: MPDIAIEVVYALPEKQYLYNVKVPQGSSVEQAIIASGLLQLRPEIDLQENKVGIFSRPVKLHDEVNGGDRVEIYRPLIADPKDLRRQRAERAAKK.

Belongs to the UPF0125 (RnfH) family.

This Erwinia tasmaniensis (strain DSM 17950 / CFBP 7177 / CIP 109463 / NCPPB 4357 / Et1/99) protein is Protein RnfH.